The chain runs to 266 residues: 4-hydroxy-tetrahydrodipicolinate reductase (266 aa).

Residues 8–13 (GAAGRM) and Glu33 each bind NAD(+). Arg34 is an NADP(+) binding site. NAD(+) is bound by residues 97–99 (GST) and 121–124 (APNM). The Proton donor/acceptor role is filled by His154. Residue His155 coordinates (S)-2,3,4,5-tetrahydrodipicolinate. Lys158 serves as the catalytic Proton donor. 164–165 (GT) is a binding site for (S)-2,3,4,5-tetrahydrodipicolinate.

It belongs to the DapB family.

It is found in the cytoplasm. It catalyses the reaction (S)-2,3,4,5-tetrahydrodipicolinate + NAD(+) + H2O = (2S,4S)-4-hydroxy-2,3,4,5-tetrahydrodipicolinate + NADH + H(+). The catalysed reaction is (S)-2,3,4,5-tetrahydrodipicolinate + NADP(+) + H2O = (2S,4S)-4-hydroxy-2,3,4,5-tetrahydrodipicolinate + NADPH + H(+). Its pathway is amino-acid biosynthesis; L-lysine biosynthesis via DAP pathway; (S)-tetrahydrodipicolinate from L-aspartate: step 4/4. Functionally, catalyzes the conversion of 4-hydroxy-tetrahydrodipicolinate (HTPA) to tetrahydrodipicolinate. The sequence is that of 4-hydroxy-tetrahydrodipicolinate reductase from Geobacter metallireducens (strain ATCC 53774 / DSM 7210 / GS-15).